We begin with the raw amino-acid sequence, 339 residues long: UDP-3-O-acylglucosamine N-acyltransferase (339 aa).

H239 acts as the Proton acceptor in catalysis.

It belongs to the transferase hexapeptide repeat family. LpxD subfamily. As to quaternary structure, homotrimer.

The enzyme catalyses a UDP-3-O-[(3R)-3-hydroxyacyl]-alpha-D-glucosamine + a (3R)-hydroxyacyl-[ACP] = a UDP-2-N,3-O-bis[(3R)-3-hydroxyacyl]-alpha-D-glucosamine + holo-[ACP] + H(+). It functions in the pathway bacterial outer membrane biogenesis; LPS lipid A biosynthesis. Its function is as follows. Catalyzes the N-acylation of UDP-3-O-acylglucosamine using 3-hydroxyacyl-ACP as the acyl donor. Is involved in the biosynthesis of lipid A, a phosphorylated glycolipid that anchors the lipopolysaccharide to the outer membrane of the cell. The protein is UDP-3-O-acylglucosamine N-acyltransferase of Aliivibrio fischeri (strain ATCC 700601 / ES114) (Vibrio fischeri).